Reading from the N-terminus, the 222-residue chain is N-(5'-phosphoribosyl)anthranilate isomerase (222 aa).

The protein belongs to the TrpF family.

It carries out the reaction N-(5-phospho-beta-D-ribosyl)anthranilate = 1-(2-carboxyphenylamino)-1-deoxy-D-ribulose 5-phosphate. Its pathway is amino-acid biosynthesis; L-tryptophan biosynthesis; L-tryptophan from chorismate: step 3/5. The sequence is that of N-(5'-phosphoribosyl)anthranilate isomerase from Xanthomonas oryzae pv. oryzae (strain PXO99A).